A 446-amino-acid chain; its full sequence is Kynurenine 3-monooxygenase (446 aa).

It belongs to the aromatic-ring hydroxylase family. KMO subfamily. It depends on FAD as a cofactor.

It catalyses the reaction L-kynurenine + NADPH + O2 + H(+) = 3-hydroxy-L-kynurenine + NADP(+) + H2O. Its pathway is cofactor biosynthesis; NAD(+) biosynthesis; quinolinate from L-kynurenine: step 1/3. Its function is as follows. Catalyzes the hydroxylation of L-kynurenine (L-Kyn) to form 3-hydroxy-L-kynurenine (L-3OHKyn). Required for synthesis of quinolinic acid. This chain is Kynurenine 3-monooxygenase, found in Flavobacterium johnsoniae (strain ATCC 17061 / DSM 2064 / JCM 8514 / BCRC 14874 / CCUG 350202 / NBRC 14942 / NCIMB 11054 / UW101) (Cytophaga johnsonae).